The chain runs to 639 residues: NADP-dependent malic enzyme, chloroplastic (639 aa).

The transit peptide at 1–49 directs the protein to the chloroplast; that stretch reads MLSARAAATAAAAAASPLWKRGEGGSSGSGSGCTSCREVRRRAAAVRVR. The tract at residues 15-34 is disordered; sequence ASPLWKRGEGGSSGSGSGCT. The active-site Proton donor is Y187. An NAD(+)-binding site is contributed by R240. K258 functions as the Proton acceptor in the catalytic mechanism. Residues E330, D331, and D354 each contribute to the a divalent metal cation site. D354 contacts NAD(+). 383-399 serves as a coordination point for NADP(+); it reads LFLGAGEAGTGIAELIA. An NAD(+)-binding site is contributed by N495.

This sequence belongs to the malic enzymes family. In terms of assembly, homotetramer. Mg(2+) serves as cofactor. The cofactor is Mn(2+).

It localises to the plastid. It is found in the chloroplast. It catalyses the reaction (S)-malate + NADP(+) = pyruvate + CO2 + NADPH. It carries out the reaction oxaloacetate + H(+) = pyruvate + CO2. The protein operates within photosynthesis; C4 acid pathway. In terms of biological role, the chloroplastic ME isoform decarboxylates malate shuttled from neighboring mesophyll cells. The CO(2) released is then refixed by ribulose-bisphosphate carboxylase. This pathway eliminates the photorespiratory loss of CO(2) that occurs in most plants. In Oryza sativa subsp. japonica (Rice), this protein is NADP-dependent malic enzyme, chloroplastic (ME6).